We begin with the raw amino-acid sequence, 205 residues long: Small ribosomal subunit protein uS4c (205 aa).

The segment at 16–40 (GKLPSLTNKTSKKRKSPGQPATSFK) is disordered. An S4 RNA-binding domain is found at 93-161 (MRLDNIVHRI…IQKNIESKEL (69 aa)).

This sequence belongs to the universal ribosomal protein uS4 family. As to quaternary structure, part of the 30S ribosomal subunit. Contacts protein S5. The interaction surface between S4 and S5 is involved in control of translational fidelity.

The protein localises to the plastid. It is found in the chloroplast. In terms of biological role, one of the primary rRNA binding proteins, it binds directly to 16S rRNA where it nucleates assembly of the body of the 30S subunit. With S5 and S12 plays an important role in translational accuracy. In Euglena gracilis, this protein is Small ribosomal subunit protein uS4c (rps4).